Reading from the N-terminus, the 54-residue chain is Large ribosomal subunit protein bL33 (54 aa).

This sequence belongs to the bacterial ribosomal protein bL33 family.

This chain is Large ribosomal subunit protein bL33, found in Buchnera aphidicola subsp. Cinara cedri (strain Cc).